Here is a 496-residue protein sequence, read N- to C-terminus: MINTQNKKFNKYFVPCLGGIFGGIATSTHFWLLFMPLSLFILWSRSDKKLANFLWGFFFILVSHSWLYELHPLTWLGFSWISSLIISISILFGCSIIGGILVYLWGLLVKKILQKKEISNMNSLRLTIKVLLLSFAWGIGEFILSQTPLFWIGLGEGIVPGDLYLAGLARWIGASGLCVVQLTIGFWIYLIYEKWKRKYHFKKTFLFGLLILVILHFLGGLTNPIERNNDYPVALWQTNMPTREKTNFKNQFINDKLISAQKIALSNDAKLLITPEGTLNNNFNLNFKSKIRMLAGGFRNSKNGLRSSLLGYQIGDKTYSSFIDKHRLVPLGEKIPGFLNIFSRGLSAVGGIQPGSDSRFFKWKFTQPLAIAICYEITDGFKIRNAVKSGAELIISAANLDPYPRKLHYQFLSLARVRSIENKKDNIIISNTGPSGLISEEGKIIKLFDPNTEQNDVVNPNFSIEKTFYTTYGERPLFLLCLFLIGLNLYFGKFTN.

6 helical membrane-spanning segments follow: residues 23-43 (GIATSTHFWLLFMPLSLFILW), 50-70 (LANFLWGFFFILVSHSWLYEL), 84-104 (LIISISILFGCSIIGGILVYL), 126-146 (LTIKVLLLSFAWGIGEFILSQ), 171-191 (WIGASGLCVVQLTIGFWIYLI), and 205-225 (FLFGLLILVILHFLGGLTNPI). The CN hydrolase domain occupies 236–464 (WQTNMPTREK…NDVVNPNFSI (229 aa)). The active-site Proton acceptor is the Glu276. The active site involves Lys325. The Nucleophile role is filled by Cys374. The helical transmembrane segment at 476-496 (PLFLLCLFLIGLNLYFGKFTN) threads the bilayer.

Belongs to the CN hydrolase family. Apolipoprotein N-acyltransferase subfamily.

It is found in the cell inner membrane. The enzyme catalyses N-terminal S-1,2-diacyl-sn-glyceryl-L-cysteinyl-[lipoprotein] + a glycerophospholipid = N-acyl-S-1,2-diacyl-sn-glyceryl-L-cysteinyl-[lipoprotein] + a 2-acyl-sn-glycero-3-phospholipid + H(+). It participates in protein modification; lipoprotein biosynthesis (N-acyl transfer). Functionally, catalyzes the phospholipid dependent N-acylation of the N-terminal cysteine of apolipoprotein, the last step in lipoprotein maturation. The chain is Apolipoprotein N-acyltransferase from Prochlorococcus marinus subsp. pastoris (strain CCMP1986 / NIES-2087 / MED4).